Here is a 354-residue protein sequence, read N- to C-terminus: MSKTILFTGGGTAGHVMINIVLIPKFIEKGWRVEYIGSKNGIEKSLVQNVKYNSVSTGKLRRYWDWDNFKDPFKIIRGCLQSYNLIKKTKPDVIFSAGGFVSVPVAIGAWLNRVPIIIREPDSTLGLANKIALPFATKLCTTFPQTGENVSNEKKVYVGPIVRVEIEKGNVLRGRRYCEFQQDKPVLLIMGGSQGAKWINDMVRECLDTILLNFNIIHICGKGKVDPSIGMEGYMQFEYIGDELPHILNMASVVVSRAGSTAISELLFLKKPMLLIPLTNSSSRGDQVLNAEYFSRQGYAEVILQDRVSTNTFIHAVNKLYTNKEKYIQNMNGYKKTNDEGIHQIIDIINEVVK.

Residues 12–14 (TAG), arginine 163, serine 193, and glutamine 287 each bind UDP-N-acetyl-alpha-D-glucosamine.

The protein belongs to the glycosyltransferase 28 family. MurG subfamily.

The protein localises to the cell membrane. It carries out the reaction di-trans,octa-cis-undecaprenyl diphospho-N-acetyl-alpha-D-muramoyl-L-alanyl-D-glutamyl-meso-2,6-diaminopimeloyl-D-alanyl-D-alanine + UDP-N-acetyl-alpha-D-glucosamine = di-trans,octa-cis-undecaprenyl diphospho-[N-acetyl-alpha-D-glucosaminyl-(1-&gt;4)]-N-acetyl-alpha-D-muramoyl-L-alanyl-D-glutamyl-meso-2,6-diaminopimeloyl-D-alanyl-D-alanine + UDP + H(+). It functions in the pathway cell wall biogenesis; peptidoglycan biosynthesis. Functionally, cell wall formation. Catalyzes the transfer of a GlcNAc subunit on undecaprenyl-pyrophosphoryl-MurNAc-pentapeptide (lipid intermediate I) to form undecaprenyl-pyrophosphoryl-MurNAc-(pentapeptide)GlcNAc (lipid intermediate II). This Bacillus cereus (strain ATCC 14579 / DSM 31 / CCUG 7414 / JCM 2152 / NBRC 15305 / NCIMB 9373 / NCTC 2599 / NRRL B-3711) protein is UDP-N-acetylglucosamine--N-acetylmuramyl-(pentapeptide) pyrophosphoryl-undecaprenol N-acetylglucosamine transferase 3.